An 803-amino-acid polypeptide reads, in one-letter code: Volume-regulated anion channel subunit LRRC8C (803 aa).

At 1-22 (MIPVTEFRQFSEQQPAFRVLKP) the chain is on the cytoplasmic side. Residues 23–43 (WWDVFTDYLSVAMLMIGVFGC) traverse the membrane as a helical segment. Over 44-125 (TLQVMQDKII…YERALHWYAK (82 aa)) the chain is Extracellular. Disulfide bonds link Cys54/Cys308 and Cys115/Cys293. N-linked (GlcNAc...) asparagine glycans are attached at residues Asn64 and Asn70. A helical transmembrane segment spans residues 126-146 (YFPYLVLIHTLVFMLCSNFWF). Residues 147–266 (KFPGSSSKIE…ILYAMYVRQT (120 aa)) lie on the Cytoplasmic side of the membrane. Residues 177-209 (EVSGEDSEEKDNRKNNMSRSNTTQSGPEGSLVN) are disordered. The segment covering 191 to 209 (NNMSRSNTTQSGPEGSLVN) has biased composition (polar residues). Ser212 and Ser215 each carry phosphoserine. The helical transmembrane segment at 267–287 (VLKVIKFLIIIAYNSALVSKV) threads the bilayer. The Extracellular portion of the chain corresponds to 288-320 (QFTVDCNVDIQDMTGYKNFSCNHTMAHLFSKLS). Residues 321–341 (FCYLCFVSIYGLTCLYTLYWL) traverse the membrane as a helical segment. Residues 342-803 (FYRSLKEYSF…SDVREQMKTE (462 aa)) are Cytoplasmic-facing. LRR repeat units follow at residues 397–419 (ENKL…QKLQ), 420–443 (TNAH…VFEI), 446–465 (LQSL…TIAQ), 468–490 (NLQE…SFLK), 492–513 (NLKV…MYGL), 515–536 (NLEE…VTLE), 543–563 (SLKI…VVDV), 566–586 (HLQK…NNLK), 590–611 (NLTE…VFSL), 613–634 (SLQE…VSFQ), 638–659 (KLTV…IKKL), 661–682 (SLER…LFLC), 684–705 (KIRY…IGVL), 707–728 (SLQY…LYFC), 730–751 (KLKT…IGNL), 753–774 (FLSY…LGDC), and 776–799 (ALKR…VREQ).

It belongs to the LRRC8 family. As to quaternary structure, heterohexamer; oligomerizes with other LRRC8 proteins (LRRC8A, LRRC8B, LRRC8D and/or LRRC8E) to form a heterohexamer. Homoheptamer; inactive, likely because it is not targeted to the plasma membrane in the absence of LRRC8A. In vivo, the subunit composition may depend primarily on expression levels, and heterooligomeric channels containing various proportions of the different LRRC8 proteins may coexist.

Its subcellular location is the cell membrane. The protein resides in the endoplasmic reticulum membrane. The catalysed reaction is chloride(in) = chloride(out). It catalyses the reaction iodide(out) = iodide(in). It carries out the reaction taurine(out) = taurine(in). The enzyme catalyses 2',3'-cGAMP(out) = 2',3'-cGAMP(in). Functionally, non-essential component of the volume-regulated anion channel (VRAC, also named VSOAC channel), an anion channel required to maintain a constant cell volume in response to extracellular or intracellular osmotic changes. The VRAC channel conducts iodide better than chloride and can also conduct organic osmolytes like taurine. Plays a redundant role in the efflux of amino acids, such as aspartate and glutamate, in response to osmotic stress. The VRAC channel also mediates transport of immunoreactive cyclic dinucleotide GMP-AMP (2'-3'-cGAMP), an immune messenger produced in response to DNA virus in the cytosol. Channel activity requires LRRC8A plus at least one other family member (LRRC8B, LRRC8C, LRRC8D or LRRC8E); channel characteristics depend on the precise subunit composition. The protein is Volume-regulated anion channel subunit LRRC8C of Bos taurus (Bovine).